A 265-amino-acid chain; its full sequence is Anamorsin homolog 1 (265 aa).

Residues 1-143 (MAATAAAALA…KASWSMGSSF (143 aa)) are N-terminal SAM-like domain. The tract at residues 144-175 (PLKKATKGLPKIQIDDDSELIDEDSLLTEDDL) is linker. The [2Fe-2S] cluster site is built by Cys-186, Cys-195, Cys-198, and Cys-200. Residues 186–200 (CEVGATRKACKNCTC) form a fe-S binding site A region. Cys-226, Cys-229, Cys-237, and Cys-240 together coordinate [4Fe-4S] cluster. 2 short sequence motifs (cx2C motif) span residues 226–229 (CGNC) and 237–240 (CGTC). The fe-S binding site B stretch occupies residues 226–240 (CGNCGLGDAFRCGTC).

Belongs to the anamorsin family. Monomer. [2Fe-2S] cluster is required as a cofactor. Requires [4Fe-4S] cluster as cofactor.

It localises to the cytoplasm. The protein localises to the mitochondrion intermembrane space. In terms of biological role, component of the cytosolic iron-sulfur (Fe-S) protein assembly (CIA) machinery. Required for the maturation of extramitochondrial Fe-S proteins. Part of an electron transfer chain functioning in an early step of cytosolic Fe-S biogenesis, facilitating the de novo assembly of a [4Fe-4S] cluster on the cytosolic Fe-S scaffold complex. Electrons are transferred from NADPH via a FAD- and FMN-containing diflavin oxidoreductase. Together with the diflavin oxidoreductase, also required for the assembly of the diferric tyrosyl radical cofactor of ribonucleotide reductase (RNR), probably by providing electrons for reduction during radical cofactor maturation in the catalytic small subunit. The sequence is that of Anamorsin homolog 1 from Oryza sativa subsp. indica (Rice).